Here is a 127-residue protein sequence, read N- to C-terminus: Evasin P467 (127 aa).

A signal peptide spans Met-1–Gly-21. 4 disulfides stabilise this stretch: Cys-42/Cys-63, Cys-59/Cys-100, Cys-76/Cys-105, and Cys-95/Cys-114. N-linked (GlcNAc...) asparagine glycosylation is found at Asn-49 and Asn-94.

The protein localises to the secreted. Its function is as follows. Salivary chemokine-binding protein which binds to host chemokines CCL1, CCL2, CCL3 and CCL5. This chain is Evasin P467, found in Rhipicephalus pulchellus (Yellow backed tick).